A 744-amino-acid polypeptide reads, in one-letter code: Adenosylcobalamin-dependent ribonucleoside-triphosphate reductase (744 aa).

C120 and C424 form a disulfide bridge. Residues 148-159 (SMPFSFLFDQLM) are effector region-1. Positions 169–318 (VDDNINQIPQ…ICNLIGKTVV (150 aa)) are effector region-2. Residues C413 and E415 contribute to the active site. The adenosylcobalamin-binding-1 stretch occupies residues 570 to 631 (FHYAGYLIQR…SKNFASAGTV (62 aa)). The interval 690 to 729 (LKQAPKEPINKKAYEDRVAMITGDVKEVFENQNKDQKGLE) is adenosylcobalamin-binding-2.

The protein belongs to the class II ribonucleoside-triphosphate reductase family. In terms of assembly, monomer. It depends on adenosylcob(III)alamin as a cofactor.

The catalysed reaction is a 2'-deoxyribonucleoside 5'-triphosphate + [thioredoxin]-disulfide + H2O = a ribonucleoside 5'-triphosphate + [thioredoxin]-dithiol. With respect to regulation, allosterically regulated by ATP and dNTP. In Lactobacillus helveticus (strain DPC 4571), this protein is Adenosylcobalamin-dependent ribonucleoside-triphosphate reductase (rtpR).